The following is a 97-amino-acid chain: Class II hydrophobin 3 (97 aa).

The N-terminal stretch at 1-16 (MKFFAAAALFIAGVLA) is a signal peptide. Disulfide bonds link Cys30–Cys79, Cys40–Cys70, Cys41–Cys53, and Cys80–Cys91.

This sequence belongs to the cerato-ulmin hydrophobin family. In terms of assembly, homodimer. Homodimers further self-assemble to form highly ordered films at water-air interfaces through intermolecular interactions.

It is found in the secreted. The protein resides in the cell wall. Its function is as follows. Aerial growth, conidiation, and dispersal of filamentous fungi in the environment rely upon a capability of their secreting small amphipathic proteins called hydrophobins (HPBs) with low sequence identity. Class I can self-assemble into an outermost layer of rodlet bundles on aerial cell surfaces, conferring cellular hydrophobicity that supports fungal growth, development and dispersal; whereas Class II form highly ordered films at water-air interfaces through intermolecular interactions but contribute nothing to the rodlet structure. This chain is Class II hydrophobin 3, found in Trichoderma asperellum (strain ATCC 204424 / CBS 433.97 / NBRC 101777).